We begin with the raw amino-acid sequence, 379 residues long: Cell division protein FtsZ (379 aa).

GTP-binding positions include 18 to 22 (GGGVN), 105 to 107 (GTG), glutamate 136, arginine 140, and aspartate 184.

It belongs to the FtsZ family. In terms of assembly, homodimer. Polymerizes to form a dynamic ring structure in a strictly GTP-dependent manner. Interacts directly with several other division proteins.

It localises to the cytoplasm. In terms of biological role, essential cell division protein that forms a contractile ring structure (Z ring) at the future cell division site. The regulation of the ring assembly controls the timing and the location of cell division. One of the functions of the FtsZ ring is to recruit other cell division proteins to the septum to produce a new cell wall between the dividing cells. Binds GTP and shows GTPase activity. This chain is Cell division protein FtsZ, found in Mycobacterium leprae (strain TN).